The following is a 480-amino-acid chain: Mannose-1-phosphate guanylyltransferase ManC (480 aa).

It belongs to the mannose-6-phosphate isomerase type 2 family.

The enzyme catalyses alpha-D-mannose 1-phosphate + GTP + H(+) = GDP-alpha-D-mannose + diphosphate. It participates in nucleotide-sugar biosynthesis; GDP-alpha-D-mannose biosynthesis; GDP-alpha-D-mannose from alpha-D-mannose 1-phosphate (GTP route): step 1/1. Functionally, involved in the biosynthesis of the capsular polysaccharide colanic acid. This is Mannose-1-phosphate guanylyltransferase ManC (manC) from Salmonella typhimurium (strain LT2 / SGSC1412 / ATCC 700720).